We begin with the raw amino-acid sequence, 159 residues long: Globin C, coelomic (159 aa).

At G2 the chain carries N-acetylglycine. Residues 12 to 158 (DLTLAQKKIV…VQAVLLVKHG (147 aa)) form the Globin domain. H74 and H105 together coordinate heme b.

The protein belongs to the globin family. As to quaternary structure, monomer.

The polypeptide is Globin C, coelomic (Molpadia arenicola (Sea cucumber)).